An 894-amino-acid polypeptide reads, in one-letter code: DNA mismatch repair protein MutS (894 aa).

An ATP-binding site is contributed by 607–614 (GPNMSGKS).

It belongs to the DNA mismatch repair MutS family.

This protein is involved in the repair of mismatches in DNA. It is possible that it carries out the mismatch recognition step. This protein has a weak ATPase activity. This chain is DNA mismatch repair protein MutS, found in Bacillus cereus (strain ZK / E33L).